A 455-amino-acid chain; its full sequence is Venom prothrombin activator hopsarin-D (455 aa).

Residues 1–20 (MAPQLLLCLILTFLWSVPEA) form the signal peptide. Positions 21–40 (ESNVFLKSKVANRFLQRTKR) are excised as a propeptide. Residues 41-86 (SNSLFEEIRPGNIERECIEEKCSKEEAREVFEDNEKTETFWNVYVD) form the Gla domain. Glu-46, Glu-47, Glu-54, Glu-56, Glu-59, Glu-60, Glu-65, Glu-66, Glu-69, Glu-72, and Glu-75 each carry 4-carboxyglutamate. A disulfide bond links Cys-57 and Cys-62. Residues 86-121 (DGDQCSSNPCHYHGTCKDGIGSYTCTCLPNYEGKNC) form the EGF-like 1; calcium-binding domain. 10 disulfides stabilise this stretch: Cys-90–Cys-101, Cys-95–Cys-110, Cys-112–Cys-121, Cys-129–Cys-140, Cys-136–Cys-149, Cys-151–Cys-164, Cys-172–Cys-328, Cys-236–Cys-252, Cys-376–Cys-390, and Cys-401–Cys-429. O-linked (Hex...) serine glycosylation is present at Ser-92. One can recognise an EGF-like 2 domain in the interval 129–164 (CRAFNGNCWHFCKRVQSETQCSCAESYRLGVDGHSC). Residues 182-209 (REASLPDFVQSQKATLLKKSDNPSPDIR) constitute a propeptide, activation peptide. The 244-residue stretch at 210 to 453 (IVNGMDSKLG…FIPWIKKIMS (244 aa)) folds into the Peptidase S1 domain. His-251 functions as the Charge relay system in the catalytic mechanism. The N-linked (GlcNAc...) asparagine glycan is linked to Asn-254. The active-site Charge relay system is the Asp-308. Catalysis depends on Ser-405, which acts as the Charge relay system.

The protein belongs to the peptidase S1 family. Snake venom subfamily. As to quaternary structure, heterodimer of a light chain and a heavy chain; disulfide-linked. The vitamin K-dependent, enzymatic carboxylation of some glutamate residues allows the modified protein to bind calcium. Expressed by the venom gland.

It is found in the secreted. The catalysed reaction is Selective cleavage of Arg-|-Thr and then Arg-|-Ile bonds in prothrombin to form thrombin.. Snake prothrombin activator that attacks the hemostatic system of prey. This protein is functionally similar to blood coagulation factor Xa. The procoagulant activity of hopsarin-D is approximately 10-fold lower than that of trocarin-D and FXa. In Hoplocephalus stephensii (Stephens's banded snake), this protein is Venom prothrombin activator hopsarin-D.